Reading from the N-terminus, the 842-residue chain is Envelope glycoprotein gp160 (842 aa).

Positions 1–23 (MGMKSGWLLFYLLVSLIKVIGSE) are cleaved as a signal peptide. At 24–663 (QHWVTVYYGV…ITKWLWYIKI (640 aa)) the chain is on the extracellular side. C45 and C65 are oxidised to a cystine. N-linked (GlcNAc...) asparagine; by host glycans are attached at residues N79, N123, N131, N134, N149, N153, N181, N190, N225, N229, N234, N255, N267, N278, N284, N290, N320, N331, and N345. Disulfide bonds link C110/C198, C117/C189, C122/C150, C211/C240, and C221/C232. The tract at residues 122-149 (CNDSYGEERNNTNMTTREPDIGYKQMKN) is V1. Residues 150 to 189 (CSFNATTELTDKKKQVYSLFYVEDVVPINAYNKTYRLINC) are V2. A V3 region spans residues 285–318 (CTRPGNNTGGQVQIGPAMTFYNIEKIVGDIRQAY). C285 and C319 are oxidised to a cystine. The interval 353–363 (RNEGDLEVTHL) is CD4-binding loop. 2 disulfide bridges follow: C367–C423 and C374–C396. The interval 374–396 (CNTSKLFNEELLNETGEPITLPC) is V4. N-linked (GlcNAc...) asparagine; by host glycosylation is found at N375, N386, N422, and N426. V5 stretches follow at residues 439 to 448 (DTKETIVYPS) and 441 to 448 (KETIVYPS). A fusion peptide region spans residues 489 to 510 (AAFGLGALFLGFLGAAGSTMGA). Residues 552–570 (KQLQAKVLAIERYLRDQQI) form an immunosuppression region. Residues C576 and C582 are joined by a disulfide bond. N-linked (GlcNAc...) asparagine; by host glycosylation is found at N589, N594, N595, N604, and N616. A coiled-coil region spans residues 612-646 (EKVRNYSGVIFGLIEQAQEQQNTNEKSLLELDQWD). The interval 641–662 (ELDQWDSLWSWFGITKWLWYIK) is MPER; binding to GalCer. A helical membrane pass occupies residues 664–684 (AIMIVAGIVGIRIISIVITII). At 685-842 (ARVRQGYSPL…IRQGLERALI (158 aa)) the chain is on the cytoplasmic side. Positions 691-694 (YSPL) match the YXXL motif; contains endocytosis signal motif.

The protein belongs to the HIV-1 env protein family. In terms of assembly, the mature envelope protein (Env) consists of a homotrimer of non-covalently associated gp120-gp41 heterodimers. The resulting complex protrudes from the virus surface as a spike. There seems to be as few as 10 spikes on the average virion. Interacts with host CD4, CCR5 and CXCR4. Gp120 also interacts with the C-type lectins CD209/DC-SIGN and CLEC4M/DC-SIGNR (collectively referred to as DC-SIGN(R)). Gp120 and gp41 interact with GalCer. Gp120 interacts with host ITGA4/ITGB7 complex; on CD4+ T-cells, this interaction results in rapid activation of integrin ITGAL/LFA-1, which facilitates efficient cell-to-cell spreading of HIV-1. Gp120 interacts with cell-associated heparan sulfate; this interaction increases virus infectivity on permissive cells and may be involved in infection of CD4- cells. The mature envelope protein (Env) consists of a homotrimer of non-covalently associated gp120-gp41 heterodimers. The resulting complex protrudes from the virus surface as a spike. There seems to be as few as 10 spikes on the average virion. Highly glycosylated by host. The high number of glycan on the protein is reffered to as 'glycan shield' because it contributes to hide protein sequence from adaptive immune system. In terms of processing, palmitoylation of the transmembrane protein and of Env polyprotein (prior to its proteolytic cleavage) is essential for their association with host cell membrane lipid rafts. Palmitoylation is therefore required for envelope trafficking to classical lipid rafts, but not for viral replication. Post-translationally, specific enzymatic cleavages in vivo yield mature proteins. Envelope glycoproteins are synthesized as an inactive precursor that is heavily N-glycosylated and processed likely by host cell furin in the Golgi to yield the mature SU and TM proteins. The cleavage site between SU and TM requires the minimal sequence [KR]-X-[KR]-R. About 2 of the 9 disulfide bonds of gp41 are reduced by P4HB/PDI, following binding to CD4 receptor.

It is found in the virion membrane. Its subcellular location is the host cell membrane. The protein localises to the host endosome membrane. Oligomerizes in the host endoplasmic reticulum into predominantly trimers. In a second time, gp160 transits in the host Golgi, where glycosylation is completed. The precursor is then proteolytically cleaved in the trans-Golgi and thereby activated by cellular furin or furin-like proteases to produce gp120 and gp41. Its function is as follows. Attaches the virus to the host lymphoid cell by binding to the primary receptor CD4. This interaction induces a structural rearrangement creating a high affinity binding site for a chemokine coreceptor like CXCR4 and/or CCR5. Acts as a ligand for CD209/DC-SIGN and CLEC4M/DC-SIGNR, which are respectively found on dendritic cells (DCs), and on endothelial cells of liver sinusoids and lymph node sinuses. These interactions allow capture of viral particles at mucosal surfaces by these cells and subsequent transmission to permissive cells. HIV subverts the migration properties of dendritic cells to gain access to CD4+ T-cells in lymph nodes. Virus transmission to permissive T-cells occurs either in trans (without DCs infection, through viral capture and transmission), or in cis (following DCs productive infection, through the usual CD4-gp120 interaction), thereby inducing a robust infection. In trans infection, bound virions remain infectious over days and it is proposed that they are not degraded, but protected in non-lysosomal acidic organelles within the DCs close to the cell membrane thus contributing to the viral infectious potential during DCs' migration from the periphery to the lymphoid tissues. On arrival at lymphoid tissues, intact virions recycle back to DCs' cell surface allowing virus transmission to CD4+ T-cells. Functionally, acts as a class I viral fusion protein. Under the current model, the protein has at least 3 conformational states: pre-fusion native state, pre-hairpin intermediate state, and post-fusion hairpin state. During fusion of viral and target intracellular membranes, the coiled coil regions (heptad repeats) assume a trimer-of-hairpins structure, positioning the fusion peptide in close proximity to the C-terminal region of the ectodomain. The formation of this structure appears to drive apposition and subsequent fusion of viral and target cell membranes. Complete fusion occurs in host cell endosomes and is dynamin-dependent, however some lipid transfer might occur at the plasma membrane. The virus undergoes clathrin-dependent internalization long before endosomal fusion, thus minimizing the surface exposure of conserved viral epitopes during fusion and reducing the efficacy of inhibitors targeting these epitopes. Membranes fusion leads to delivery of the nucleocapsid into the cytoplasm. This chain is Envelope glycoprotein gp160, found in Human immunodeficiency virus type 1 group N (isolate YBF30) (HIV-1).